Reading from the N-terminus, the 1216-residue chain is Coatomer subunit alpha-1 (1216 aa).

8 WD repeats span residues 7–48 (TKSN…DRFD), 49–88 (EHEGPVRGVHFHNSQPLFVSGGDDYKIKVWNYKNHRCLFT), 91–132 (GHLD…SVLT), 133–172 (GHNHYVMCASFHPKEDLVVSASLDQTVRVWDIGALRKKTV), 202–241 (GHDRGVNWAAFHPTLPLIVSGADDRQVKLWRMNETKAWEV), 246–285 (GHMNNVSSVMFHAKQDIIVSNSEDKSIRVWDATKRTGLQT), 288–326 (REHDRFWILAVHPEMNLLAAGHDSGMIVFKLERERPAFA), and 363–404 (SLNQ…VGRS).

In terms of assembly, oligomeric complex that consists of at least the alpha, beta, beta', gamma, delta, epsilon and zeta subunits.

Its subcellular location is the cytoplasm. The protein resides in the golgi apparatus membrane. It is found in the cytoplasmic vesicle. The protein localises to the COPI-coated vesicle membrane. Its function is as follows. The coatomer is a cytosolic protein complex that binds to dilysine motifs and reversibly associates with Golgi non-clathrin-coated vesicles, which further mediate biosynthetic protein transport from the ER, via the Golgi up to the trans Golgi network. Coatomer complex is required for budding from Golgi membranes, and is essential for the retrograde Golgi-to-ER transport of dilysine-tagged proteins. This Arabidopsis thaliana (Mouse-ear cress) protein is Coatomer subunit alpha-1.